Here is a 401-residue protein sequence, read N- to C-terminus: 1-deoxy-D-xylulose 5-phosphate reductoisomerase (401 aa).

Thr-10, Gly-11, Ser-12, Ile-13, Gly-36, Arg-37, Asn-38, and Asn-124 together coordinate NADPH. Position 125 (Lys-125) interacts with 1-deoxy-D-xylulose 5-phosphate. Glu-126 contacts NADPH. Residue Asp-150 participates in Mn(2+) binding. Positions 151, 152, 176, and 199 each coordinate 1-deoxy-D-xylulose 5-phosphate. Residue Glu-152 participates in Mn(2+) binding. Gly-205 lines the NADPH pocket. Residues Ser-212, Asn-217, Lys-218, and Glu-221 each coordinate 1-deoxy-D-xylulose 5-phosphate. Glu-221 is a binding site for Mn(2+).

The protein belongs to the DXR family. It depends on Mg(2+) as a cofactor. The cofactor is Mn(2+).

It catalyses the reaction 2-C-methyl-D-erythritol 4-phosphate + NADP(+) = 1-deoxy-D-xylulose 5-phosphate + NADPH + H(+). It functions in the pathway isoprenoid biosynthesis; isopentenyl diphosphate biosynthesis via DXP pathway; isopentenyl diphosphate from 1-deoxy-D-xylulose 5-phosphate: step 1/6. Catalyzes the NADPH-dependent rearrangement and reduction of 1-deoxy-D-xylulose-5-phosphate (DXP) to 2-C-methyl-D-erythritol 4-phosphate (MEP). The chain is 1-deoxy-D-xylulose 5-phosphate reductoisomerase from Acaryochloris marina (strain MBIC 11017).